Reading from the N-terminus, the 310-residue chain is Ribose-phosphate pyrophosphokinase (310 aa).

ATP is bound by residues 34–36 (DME) and 93–94 (RQ). Mg(2+) is bound by residues histidine 127 and aspartate 167. The active site involves lysine 190. D-ribose 5-phosphate-binding positions include arginine 192, aspartate 216, and 220-224 (DSGGT).

This sequence belongs to the ribose-phosphate pyrophosphokinase family. Class I subfamily. As to quaternary structure, homohexamer. Requires Mg(2+) as cofactor.

It localises to the cytoplasm. It catalyses the reaction D-ribose 5-phosphate + ATP = 5-phospho-alpha-D-ribose 1-diphosphate + AMP + H(+). It participates in metabolic intermediate biosynthesis; 5-phospho-alpha-D-ribose 1-diphosphate biosynthesis; 5-phospho-alpha-D-ribose 1-diphosphate from D-ribose 5-phosphate (route I): step 1/1. In terms of biological role, involved in the biosynthesis of the central metabolite phospho-alpha-D-ribosyl-1-pyrophosphate (PRPP) via the transfer of pyrophosphoryl group from ATP to 1-hydroxyl of ribose-5-phosphate (Rib-5-P). The polypeptide is Ribose-phosphate pyrophosphokinase (Granulibacter bethesdensis (strain ATCC BAA-1260 / CGDNIH1)).